We begin with the raw amino-acid sequence, 475 residues long: Eukaryotic translation initiation factor 3 subunit L (475 aa).

Residues 257 to 451 form the PCI domain; it reads DAIRMFSHIL…DLDYAMQGDL (195 aa).

This sequence belongs to the eIF-3 subunit L family. As to quaternary structure, component of the eukaryotic translation initiation factor 3 (eIF-3) complex.

The protein resides in the cytoplasm. Component of the eukaryotic translation initiation factor 3 (eIF-3) complex, which is involved in protein synthesis of a specialized repertoire of mRNAs and, together with other initiation factors, stimulates binding of mRNA and methionyl-tRNAi to the 40S ribosome. The eIF-3 complex specifically targets and initiates translation of a subset of mRNAs involved in cell proliferation. The sequence is that of Eukaryotic translation initiation factor 3 subunit L from Botryotinia fuckeliana (strain B05.10) (Noble rot fungus).